The chain runs to 228 residues: Small ribosomal subunit protein uS7A (228 aa).

Belongs to the universal ribosomal protein uS7 family.

The sequence is that of Small ribosomal subunit protein uS7A (RpS5a) from Drosophila melanogaster (Fruit fly).